The sequence spans 416 residues: Enterobactin exporter EntS (416 aa).

The Cytoplasmic portion of the chain corresponds to 1-21 (MNKQSWLLNLSLLKTHPAFRA). Residues 22–42 (VFLARFISIVSLGLLGVAVPV) traverse the membrane as a helical segment. At 43–55 (QIQMMTHSTWQVG) the chain is on the periplasmic side. The helical transmembrane segment at 56 to 76 (LSVTLTGGAMFVGLMVGGVLA) threads the bilayer. The Cytoplasmic segment spans residues 77–83 (DRYERKK). Residues 84–104 (VILLARGTCGIGFIGLCLNAL) form a helical membrane-spanning segment. Residues 105 to 109 (LPEPS) are Periplasmic-facing. The helical transmembrane segment at 110-130 (LLAIYLLGLWDGFFASLGVTA) threads the bilayer. Over 131 to 156 (LLAATPALVGRENLMQAGAITMLTVR) the chain is Cytoplasmic. Residues 157–177 (LGSVISPMIGGLLLATGGVAW) form a helical membrane-spanning segment. Position 178 (N178) is a topological domain, periplasmic. Residues 179 to 199 (YGLAAAGTFITLLPLLSLPAL) traverse the membrane as a helical segment. Topologically, residues 200–218 (PPPPQPREHPLKSLLAGFR) are cytoplasmic. A helical membrane pass occupies residues 219–239 (FLLASPLVGGIALLGGLLTMA). Residues 240 to 256 (SAVRVLYPALADNWQMS) lie on the Periplasmic side of the membrane. A helical membrane pass occupies residues 257 to 277 (AAQIGFLYAAIPLGAAIGALT). Residues 278-287 (SGKLAHSARP) are Cytoplasmic-facing. The chain crosses the membrane as a helical span at residues 288–307 (GLLMLLSTLGSFLAIGLFGL). Residues 308–313 (MPMWIL) lie on the Periplasmic side of the membrane. The chain crosses the membrane as a helical span at residues 314–336 (GVVCLALFGWLSAVSSLLQYTML). Residues 337 to 356 (QTQTPEAMLGRINGLWTAQN) lie on the Cytoplasmic side of the membrane. Residues 357–377 (VTGDAIGAALLGGLGAMMTPV) traverse the membrane as a helical segment. Position 378 (A378) is a topological domain, periplasmic. The helical transmembrane segment at 379 to 399 (SASASGFGLLIIGVLLLLVLV) threads the bilayer. The Cytoplasmic segment spans residues 400–416 (ELRRFRQTPPQVTASDS).

The protein belongs to the major facilitator superfamily. EntS (TC 2.A.1.38) family.

It localises to the cell inner membrane. Component of an export pathway for enterobactin. This Escherichia coli (strain 55989 / EAEC) protein is Enterobactin exporter EntS.